Consider the following 340-residue polypeptide: Short-chain dehydrogenase/reductase ffsI (340 aa).

6 residues coordinate NADP(+): Leu46, Arg71, Asp96, Asn123, Tyr211, and Lys215. Tyr211 (proton acceptor) is an active-site residue. Catalysis depends on Lys215, which acts as the Lowers pKa of active site Tyr.

Belongs to the short-chain dehydrogenases/reductases (SDR) family.

The protein operates within mycotoxin biosynthesis. Short-chain dehydrogenase/reductase; part of the gene cluster that mediates the biosynthesis of the cytotoxic leucine-containing cytochalasans, including aspochalasin C, aspochalasin E, TMC-169, flavichalasine F, aspergillin PZ, aspochalasin M and flavichalasine G. The first step in the pathway is catalyzed by the hybrid PKS-NRPS ffsA that utilizes 8 units of malonyl-CoA to iteratively assemble the octaketide chain before addition of L-leucine by the C-terminal NRPS modules. Because ffsA lacks a designated enoylreductase (ER) domain, the required activity is provided the enoyl reductase fssC. The methyltransferase (MT) domain of ffsA catalyzes the alpha-methylation at C10 and C14 using S-adenosyl-L-methionine as the methyl-donating cosubstrate. Reduction by the hydrolyase ffsE, followed by dehydration and intra-molecular Diels-Alder cyclization by the Diels-Alderase ffsF then yield the required isoindolone-fused macrocycle. A number of oxidative steps catalyzed by the tailoring cytochrome P450 monooxygenase ffsD, the FAD-linked oxidoreductase ffsJ and the short-chain dehydrogenase/reductase ffsI, are further required to afford the final products. The chain is Short-chain dehydrogenase/reductase ffsI from Aspergillus flavipes.